We begin with the raw amino-acid sequence, 214 residues long: Pyrrolidone-carboxylate peptidase (214 aa).

Residues E80, C143, and H166 contribute to the active site.

This sequence belongs to the peptidase C15 family. Homotetramer.

The protein resides in the cytoplasm. The catalysed reaction is Release of an N-terminal pyroglutamyl group from a polypeptide, the second amino acid generally not being Pro.. In terms of biological role, removes 5-oxoproline from various penultimate amino acid residues except L-proline. The protein is Pyrrolidone-carboxylate peptidase of Klebsiella pneumoniae (strain 342).